Reading from the N-terminus, the 209-residue chain is 7-carboxy-7-deazaguanine synthase (209 aa).

Residues Ile-10–Gly-12 and Arg-25 contribute to the substrate site. In terms of domain architecture, Radical SAM core spans Tyr-16 to Asp-205. Residues Cys-29, Cys-33, and Cys-36 each coordinate [4Fe-4S] cluster. Position 38 (Thr-38) interacts with Mg(2+). Residue Thr-68 coordinates substrate. Gly-70 contacts S-adenosyl-L-methionine.

Belongs to the radical SAM superfamily. 7-carboxy-7-deazaguanine synthase family. Homodimer. It depends on [4Fe-4S] cluster as a cofactor. S-adenosyl-L-methionine serves as cofactor. Mg(2+) is required as a cofactor.

The catalysed reaction is 6-carboxy-5,6,7,8-tetrahydropterin + H(+) = 7-carboxy-7-deazaguanine + NH4(+). It functions in the pathway purine metabolism; 7-cyano-7-deazaguanine biosynthesis. Its function is as follows. Catalyzes the complex heterocyclic radical-mediated conversion of 6-carboxy-5,6,7,8-tetrahydropterin (CPH4) to 7-carboxy-7-deazaguanine (CDG), a step common to the biosynthetic pathways of all 7-deazapurine-containing compounds. The sequence is that of 7-carboxy-7-deazaguanine synthase from Thermoplasma acidophilum (strain ATCC 25905 / DSM 1728 / JCM 9062 / NBRC 15155 / AMRC-C165).